Here is a 231-residue protein sequence, read N- to C-terminus: Cytochrome c oxidase assembly factor 7A (231 aa).

Sel1-like repeat units follow at residues 34 to 66 (PDGC…DQNE), 68 to 104 (SESF…NKGG), 108 to 145 (IDSC…DGNF), 146 to 182 (AASC…SLGH), and 183 to 218 (VWGC…DLHK).

The protein belongs to the hcp beta-lactamase family.

It localises to the mitochondrion intermembrane space. Its function is as follows. May be required for assembly of mitochondrial respiratory chain complexes. The protein is Cytochrome c oxidase assembly factor 7A (coa7-a) of Xenopus laevis (African clawed frog).